The primary structure comprises 528 residues: Probable rhamnogalacturonate lyase A (528 aa).

A signal peptide spans 1–20 (MLSKATLLLSLPFWARVANA). N-linked (GlcNAc...) asparagine glycosylation is present at N46. 2 cysteine pairs are disulfide-bonded: C50–C93 and C184–C193. A glycan (N-linked (GlcNAc...) asparagine) is linked at N351.

It belongs to the polysaccharide lyase 4 family.

The protein resides in the secreted. It catalyses the reaction Endotype eliminative cleavage of L-alpha-rhamnopyranosyl-(1-&gt;4)-alpha-D-galactopyranosyluronic acid bonds of rhamnogalacturonan I domains in ramified hairy regions of pectin leaving L-rhamnopyranose at the reducing end and 4-deoxy-4,5-unsaturated D-galactopyranosyluronic acid at the non-reducing end.. Functionally, pectinolytic enzymes consist of four classes of enzymes: pectin lyase, polygalacturonase, pectin methylesterase and rhamnogalacturonase. Degrades the rhamnogalacturonan I (RG-I) backbone of pectin. This chain is Probable rhamnogalacturonate lyase A (rglA), found in Neosartorya fischeri (strain ATCC 1020 / DSM 3700 / CBS 544.65 / FGSC A1164 / JCM 1740 / NRRL 181 / WB 181) (Aspergillus fischerianus).